Consider the following 305-residue polypeptide: NAD kinase (305 aa).

Asp84 acts as the Proton acceptor in catalysis. NAD(+) contacts are provided by residues 84-85 (DG), 159-160 (NE), His170, Arg187, Asp189, 200-205 (TAYSLS), and Gln260.

The protein belongs to the NAD kinase family. A divalent metal cation serves as cofactor.

The protein resides in the cytoplasm. The catalysed reaction is NAD(+) + ATP = ADP + NADP(+) + H(+). Its function is as follows. Involved in the regulation of the intracellular balance of NAD and NADP, and is a key enzyme in the biosynthesis of NADP. Catalyzes specifically the phosphorylation on 2'-hydroxyl of the adenosine moiety of NAD to yield NADP. The sequence is that of NAD kinase from Pasteurella multocida (strain Pm70).